A 135-amino-acid chain; its full sequence is MSDPRAKGGKGGAANAKNEPKKQTTQSARAGLQFPVGRIHRHLKSRTQNHVRIGAKAAVYTSAILEYLTAEVLELAGNASKDMRLKRITPRHLQLAIRGDEELDSMVRATIAGGGVLPHIHKTLIKAPSKKKALE.

Residues 1-33 (MSDPRAKGGKGGAANAKNEPKKQTTQSARAGLQ) are disordered. The residue at position 10 (Lys10) is an N6-acetyllysine.

The protein belongs to the histone H2A family. As to quaternary structure, the nucleosome is a histone octamer containing two molecules each of H2A, H2B, H3 and H4 assembled in one H3-H4 heterotetramer and two H2A-H2B heterodimers. The octamer wraps approximately 147 bp of DNA. H2A or its variant H2A.Z forms a heterodimer with H2B. H2A.Z associates with the VPS72/SWC2 subunit of the SWR1 chromatin remodeling complex. Also interacts with RBP1/DNA-directed RNA polymerase II largest subunit. Post-translationally, acetylated once deposited into chromatin.

It localises to the nucleus. The protein localises to the chromosome. In terms of biological role, variant histone H2A which can replace H2A in some nucleosomes. Nucleosomes wrap and compact DNA into chromatin, limiting DNA accessibility to the cellular machineries which require DNA as a template. Histones thereby play a central role in transcription regulation, DNA repair, DNA replication and chromosomal stability. DNA accessibility is regulated via a complex set of post-translational modifications of histones, also called histone code, and nucleosome remodeling. This variant is enriched at promoters, it may keep them in a repressed state until the appropriate activation signal is received. Near telomeres, it may counteract gene silencing caused by the spread of heterochromatin proteins. Required for the RNA polymerase II and SPT15/TBP recruitment to the target genes. Involved in chromosome stability. In Mycosarcoma maydis (Corn smut fungus), this protein is Histone H2A.Z (HTZ1).